Reading from the N-terminus, the 494-residue chain is 3-octaprenyl-4-hydroxybenzoate carboxy-lyase (494 aa).

A Mn(2+)-binding site is contributed by asparagine 172. Residues 175–177 (IYR), 189–191 (RWL), and 194–195 (RG) each bind prenylated FMN. Mn(2+) is bound at residue glutamate 238. Catalysis depends on aspartate 287, which acts as the Proton donor.

The protein belongs to the UbiD family. Homohexamer. Requires prenylated FMN as cofactor. Mn(2+) serves as cofactor.

Its subcellular location is the cell membrane. The catalysed reaction is a 4-hydroxy-3-(all-trans-polyprenyl)benzoate + H(+) = a 2-(all-trans-polyprenyl)phenol + CO2. Its pathway is cofactor biosynthesis; ubiquinone biosynthesis. Its function is as follows. Catalyzes the decarboxylation of 3-octaprenyl-4-hydroxy benzoate to 2-octaprenylphenol, an intermediate step in ubiquinone biosynthesis. The chain is 3-octaprenyl-4-hydroxybenzoate carboxy-lyase from Escherichia coli O139:H28 (strain E24377A / ETEC).